The primary structure comprises 544 residues: CTP synthase (544 aa).

The amidoligase domain stretch occupies residues 1–266; that stretch reads MSTKFIFVTG…DYFVCRRFHL (266 aa). Position 14 (Ser14) interacts with CTP. Ser14 contributes to the UTP binding site. ATP contacts are provided by residues 15–20 and Asp72; that span reads SLGKGI. The Mg(2+) site is built by Asp72 and Glu140. Residues 147–149, 187–192, and Lys223 each bind CTP; these read DIE and KTKPTQ. UTP is bound by residues 187-192 and Lys223; that span reads KTKPTQ. The Glutamine amidotransferase type-1 domain occupies 291–542; sequence TIGMVGKYIE…VAAAHIHQKA (252 aa). Gly352 contacts L-glutamine. The active-site Nucleophile; for glutamine hydrolysis is the Cys379. Residues 380 to 383, Glu403, and Arg470 contribute to the L-glutamine site; that span reads LGMQ. Residues His515 and Glu517 contribute to the active site.

This sequence belongs to the CTP synthase family. In terms of assembly, homotetramer.

It carries out the reaction UTP + L-glutamine + ATP + H2O = CTP + L-glutamate + ADP + phosphate + 2 H(+). The catalysed reaction is L-glutamine + H2O = L-glutamate + NH4(+). It catalyses the reaction UTP + NH4(+) + ATP = CTP + ADP + phosphate + 2 H(+). Its pathway is pyrimidine metabolism; CTP biosynthesis via de novo pathway; CTP from UDP: step 2/2. Its activity is regulated as follows. Allosterically activated by GTP, when glutamine is the substrate; GTP has no effect on the reaction when ammonia is the substrate. The allosteric effector GTP functions by stabilizing the protein conformation that binds the tetrahedral intermediate(s) formed during glutamine hydrolysis. Inhibited by the product CTP, via allosteric rather than competitive inhibition. Its function is as follows. Catalyzes the ATP-dependent amination of UTP to CTP with either L-glutamine or ammonia as the source of nitrogen. Regulates intracellular CTP levels through interactions with the four ribonucleotide triphosphates. The protein is CTP synthase of Pseudoalteromonas translucida (strain TAC 125).